Reading from the N-terminus, the 156-residue chain is tRNA-specific adenosine deaminase (156 aa).

The 119-residue stretch at 2-120 (TNDIYFMTLA…GSLMNLLQQS (119 aa)) folds into the CMP/dCMP-type deaminase domain. Zn(2+) is bound at residue histidine 53. Glutamate 55 serves as the catalytic Proton donor. The Zn(2+) site is built by cysteine 83 and cysteine 86.

This sequence belongs to the cytidine and deoxycytidylate deaminase family. Homodimer. Requires Zn(2+) as cofactor.

The enzyme catalyses adenosine(34) in tRNA + H2O + H(+) = inosine(34) in tRNA + NH4(+). Its function is as follows. Catalyzes the deamination of adenosine to inosine at the wobble position 34 of tRNA(Arg2). In Staphylococcus aureus (strain Mu50 / ATCC 700699), this protein is tRNA-specific adenosine deaminase.